Consider the following 432-residue polypeptide: Protein distal antenna-related (432 aa).

In terms of domain architecture, HTH psq-type spans T15–L66. A DNA-binding region (H-T-H motif) is located at residues K42–N62. Disordered stretches follow at residues E195–K221 and S401–Q432. 2 stretches are compositionally biased toward polar residues: residues K202–T211 and S401–A425.

Interacts with itself, dan, ey and dac to form a complex (or complexes) containing the RD factors.

The protein resides in the nucleus. Functionally, probable transcription factor with a role in the retinal determination (RD) network. Regulates ato expression and is required for normal R8 induction and differentiation. Danr appears to repress Dan expression, but Dan is required for Danr expression anterior to the morphogenetic furrow (MF). Dan and Danr lie downstream of so and require dac function for highest levels of expression. Contributes to differentiation of antenna-specific characteristics; effector gene that acts downstream of homothorax (hth), Distal-less (Dll), cut (ct) and spineless (ss) genes to control differentiation of distal antennal structures. The protein is Protein distal antenna-related of Drosophila pseudoobscura pseudoobscura (Fruit fly).